Here is a 364-residue protein sequence, read N- to C-terminus: Coproporphyrin III ferrochelatase (364 aa).

Arginine 29 and tyrosine 118 together coordinate Fe-coproporphyrin III. Histidine 169 and glutamate 250 together coordinate Fe(2+).

The protein belongs to the ferrochelatase family.

It is found in the cytoplasm. The catalysed reaction is Fe-coproporphyrin III + 2 H(+) = coproporphyrin III + Fe(2+). It participates in porphyrin-containing compound metabolism; protoheme biosynthesis. Functionally, involved in coproporphyrin-dependent heme b biosynthesis. Catalyzes the insertion of ferrous iron into coproporphyrin III to form Fe-coproporphyrin III. In Streptococcus pneumoniae serotype 4 (strain ATCC BAA-334 / TIGR4), this protein is Coproporphyrin III ferrochelatase.